Reading from the N-terminus, the 215-residue chain is Glutathione S-transferase F10 (215 aa).

The GST N-terminal domain occupies 2–81 (VLTIYAPLFA…YIAEKYRSQG (80 aa)). Residues 11–12 (AS), 39–40 (QR), 52–53 (KI), and 65–66 (ES) each bind glutathione. Positions 88–215 (TIEERGQVEQ…EVSAKYSLPV (128 aa)) constitute a GST C-terminal domain.

The protein belongs to the GST superfamily. Phi family. Interacts with BAK1. In terms of tissue distribution, expressed in roots, stems, floral buds, mature flowers and leaves.

The protein resides in the cytoplasm. It localises to the cytosol. It catalyses the reaction RX + glutathione = an S-substituted glutathione + a halide anion + H(+). In terms of biological role, in vitro, possesses glutathione S-transferase activity toward 1-chloro-2,4-dinitrobenzene (CDNB) and benzyl isothiocyanate (BITC). May be involved in the conjugation of reduced glutathione to a wide number of exogenous and endogenous hydrophobic electrophiles and have a detoxification role against certain herbicides. This chain is Glutathione S-transferase F10, found in Arabidopsis thaliana (Mouse-ear cress).